A 60-amino-acid polypeptide reads, in one-letter code: Large ribosomal subunit protein bL32 (60 aa).

This sequence belongs to the bacterial ribosomal protein bL32 family.

The chain is Large ribosomal subunit protein bL32 from Persephonella marina (strain DSM 14350 / EX-H1).